Here is a 599-residue protein sequence, read N- to C-terminus: NADH-ubiquinone oxidoreductase chain 5 (599 aa).

The next 16 membrane-spanning stretches (helical) occupy residues 1–21, 28–48, 81–101, 115–135, 171–191, 193–213, 233–253, 265–285, 302–322, 323–343, 363–383, 398–420, 455–475, 481–501, 510–530, and 577–597; these read MLEL…IFLF, FAES…ILLM, CFFV…FYYM, GLFL…QLLI, GDIG…DWSF, GLYA…LAAA, TPVS…FLLI, IQLM…ICAL, LGLM…FLHI, CMHA…IHGL, SVCF…AGFF, NSWA…VRLL, VIAG…CLSL, LAAV…VNLL, IPEL…HKLI, and LIKM…GIMI.

Belongs to the complex I subunit 5 family.

The protein resides in the mitochondrion inner membrane. The catalysed reaction is a ubiquinone + NADH + 5 H(+)(in) = a ubiquinol + NAD(+) + 4 H(+)(out). Its function is as follows. Core subunit of the mitochondrial membrane respiratory chain NADH dehydrogenase (Complex I) that is believed to belong to the minimal assembly required for catalysis. Complex I functions in the transfer of electrons from NADH to the respiratory chain. The immediate electron acceptor for the enzyme is believed to be ubiquinone. This Branchiostoma floridae (Florida lancelet) protein is NADH-ubiquinone oxidoreductase chain 5 (ND5).